Consider the following 281-residue polypeptide: 2,3,4,5-tetrahydropyridine-2,6-dicarboxylate N-succinyltransferase (281 aa).

Substrate contacts are provided by arginine 108 and aspartate 145.

Belongs to the transferase hexapeptide repeat family. In terms of assembly, homotrimer.

It is found in the cytoplasm. The catalysed reaction is (S)-2,3,4,5-tetrahydrodipicolinate + succinyl-CoA + H2O = (S)-2-succinylamino-6-oxoheptanedioate + CoA. It participates in amino-acid biosynthesis; L-lysine biosynthesis via DAP pathway; LL-2,6-diaminopimelate from (S)-tetrahydrodipicolinate (succinylase route): step 1/3. This Nitrobacter winogradskyi (strain ATCC 25391 / DSM 10237 / CIP 104748 / NCIMB 11846 / Nb-255) protein is 2,3,4,5-tetrahydropyridine-2,6-dicarboxylate N-succinyltransferase.